An 89-amino-acid chain; its full sequence is UPF0367 protein PCC8801_1959 (89 aa).

It belongs to the UPF0367 family.

In Rippkaea orientalis (strain PCC 8801 / RF-1) (Cyanothece sp. (strain PCC 8801)), this protein is UPF0367 protein PCC8801_1959.